We begin with the raw amino-acid sequence, 307 residues long: Sesquiterpene synthase-like protein Agr10 (307 aa).

The disordered stretch occupies residues G287–R307. The span at E296–R307 shows a compositional bias: polar residues.

It belongs to the terpene synthase family.

This is Sesquiterpene synthase-like protein Agr10 from Cyclocybe aegerita (Black poplar mushroom).